The chain runs to 350 residues: Probable poly-beta-1,6-N-acetyl-D-glucosamine export protein (350 aa).

10 helical membrane-spanning segments follow: residues 7-29 (ELVYLRAIICAIIIITHLLTQIT), 44-66 (FYIRNIVIFGTPCFIILSQLLTT), 79-101 (TRVKYILIPYILMGLFYSYSESL), 116-138 (LLGQWYGYFIVVIMQFFILSYII), 145-167 (LFNSKILLLLSFILQQSFLYYFT), 187-204 (IIFGWIFYFFLGAYMGYN), 211-233 (FLERYLVIMIVLAVATYFVFIAL), 243-262 (SFSYSLTPYNSIMFIVILGI), 269-291 (ILFNTIQMISAFSFFIYLLHPII), and 306-328 (TMVFLAISLLFILGLCIGVGMIL).

Belongs to the acyltransferase 3 family.

Its subcellular location is the cell membrane. Its function is as follows. Presumably involved in the export of the biofilm adhesin polysaccharide poly-beta-1,6-N-acetyl-D-glucosamine (PNAG, also referred to as PIA) across the cell membrane. This chain is Probable poly-beta-1,6-N-acetyl-D-glucosamine export protein (icaC), found in Staphylococcus aureus (strain Mu50 / ATCC 700699).